A 213-amino-acid polypeptide reads, in one-letter code: Glutathione S-transferase (213 aa).

Residues 4-81 form the GST N-terminal domain; that stretch reads AKPILYGAWI…YLEDKYPQHP (78 aa). The GST C-terminal domain occupies 86–211; sequence DIKTKGLDLQ…LPQNQPDAPS (126 aa).

This sequence belongs to the GST superfamily. Zeta family.

It localises to the cytoplasm. The catalysed reaction is RX + glutathione = an S-substituted glutathione + a halide anion + H(+). Its function is as follows. Has a glutathione transferase activity with ethacrynic acid and nitrophenyl acetate. Has low glutathione peroxidase activity with cumene hydroperoxide. This Triticum aestivum (Wheat) protein is Glutathione S-transferase (GSTZ1).